The sequence spans 180 residues: ATP-dependent protease subunit HslV (180 aa).

Thr5 is a catalytic residue. Residues Gly165, Cys168, and Thr171 each contribute to the Na(+) site.

It belongs to the peptidase T1B family. HslV subfamily. As to quaternary structure, a double ring-shaped homohexamer of HslV is capped on each side by a ring-shaped HslU homohexamer. The assembly of the HslU/HslV complex is dependent on binding of ATP.

Its subcellular location is the cytoplasm. It carries out the reaction ATP-dependent cleavage of peptide bonds with broad specificity.. Allosterically activated by HslU binding. Functionally, protease subunit of a proteasome-like degradation complex believed to be a general protein degrading machinery. The protein is ATP-dependent protease subunit HslV of Helicobacter pylori (strain ATCC 700392 / 26695) (Campylobacter pylori).